A 410-amino-acid chain; its full sequence is Acetate kinase (410 aa).

A Mg(2+)-binding site is contributed by Asn-7. Lys-14 is a binding site for ATP. Residue Arg-88 participates in substrate binding. The Proton donor/acceptor role is filled by Asp-145. ATP contacts are provided by residues 203 to 207, 278 to 280, and 326 to 330; these read HAGNG, DTR, and GIGEN. Residue Glu-379 coordinates Mg(2+).

Belongs to the acetokinase family. Homodimer. It depends on Mg(2+) as a cofactor. The cofactor is Mn(2+).

The protein resides in the cytoplasm. The catalysed reaction is acetate + ATP = acetyl phosphate + ADP. It functions in the pathway metabolic intermediate biosynthesis; acetyl-CoA biosynthesis; acetyl-CoA from acetate: step 1/2. In terms of biological role, catalyzes the formation of acetyl phosphate from acetate and ATP. Can also catalyze the reverse reaction. In Chlorante-Aster yellows phytoplasma, this protein is Acetate kinase.